Here is a 156-residue protein sequence, read N- to C-terminus: 6,7-dimethyl-8-ribityllumazine synthase (156 aa).

5-amino-6-(D-ribitylamino)uracil is bound by residues Phe22, Ala57–Glu59, and Thr81–Ile83. Residue Gly86–Thr87 participates in (2S)-2-hydroxy-3-oxobutyl phosphate binding. His89 functions as the Proton donor in the catalytic mechanism. Residue Phe114 participates in 5-amino-6-(D-ribitylamino)uracil binding. Residue Arg128 participates in (2S)-2-hydroxy-3-oxobutyl phosphate binding.

The protein belongs to the DMRL synthase family. As to quaternary structure, forms an icosahedral capsid composed of 60 subunits, arranged as a dodecamer of pentamers.

It carries out the reaction (2S)-2-hydroxy-3-oxobutyl phosphate + 5-amino-6-(D-ribitylamino)uracil = 6,7-dimethyl-8-(1-D-ribityl)lumazine + phosphate + 2 H2O + H(+). Its pathway is cofactor biosynthesis; riboflavin biosynthesis; riboflavin from 2-hydroxy-3-oxobutyl phosphate and 5-amino-6-(D-ribitylamino)uracil: step 1/2. In terms of biological role, catalyzes the formation of 6,7-dimethyl-8-ribityllumazine by condensation of 5-amino-6-(D-ribitylamino)uracil with 3,4-dihydroxy-2-butanone 4-phosphate. This is the penultimate step in the biosynthesis of riboflavin. The protein is 6,7-dimethyl-8-ribityllumazine synthase of Proteus mirabilis (strain HI4320).